The chain runs to 134 residues: Replication enhancer protein (134 aa).

The protein belongs to the geminiviridae replication enhancer protein family. Homooligomer. Interacts with the replication-associated protein (REP). Interacts with host proliferating cell nuclear antigen (PCNA). Interacts with host retinoblastoma-related protein 1 (RBR1), and may thereby deregulate the host cell cycle. Oligomerization and interaction with PCNA are necessary for optimal replication enhancement.

Its function is as follows. Increases viral DNA accumulation. Enhances infectivity and symptom expression. The protein is Replication enhancer protein of Cynanchum acutum (Tomato).